A 344-amino-acid chain; its full sequence is MYVIESKGGTITCMLLALLFLGTWPAIMTLTERRGRLPQHTYLDYTLTNLLAAVIIAFTLGEISPSRPNFTTQLSQDNWPSVMFAMAGGIFLSLGTLATQYAWAFVGLSVTEVITASIAVVIGTTLNYFLDDRINRAEVLFPGVACFLIAVCFGSAVHKSNAADNKSKLQGFKSLETTSSFQMETSSIKEGKAKVGTADFLIEVEKQRAIKVFGKSTIIGLAITFFAVPKLNVYTAFFYFSISSFGVGLILNIIFLYWPILGLPRSSFKAYLNDWNGRGWSFLAGFLCGFGNGLQFMGGQAAGYAAAGAVQIENKHFGGYCCLENTKDHQEKHIHFLSVCYLCS.

Residues methionine 1–threonine 10 are Extracellular-facing. Residues isoleucine 11–threonine 31 traverse the membrane as a helical segment. The Cytoplasmic segment spans residues glutamate 32–tyrosine 42. A helical transmembrane segment spans residues leucine 43–isoleucine 63. The Extracellular portion of the chain corresponds to serine 64–asparagine 78. The helical transmembrane segment at tryptophan 79–threonine 99 threads the bilayer. Over glutamine 100–tyrosine 101 the chain is Cytoplasmic. The helical transmembrane segment at alanine 102–isoleucine 122 threads the bilayer. Over glycine 123 to arginine 136 the chain is Extracellular. Residues alanine 137 to valine 157 form a helical membrane-spanning segment. Over histidine 158–arginine 208 the chain is Cytoplasmic. Alanine 209–serine 216 contributes to the ATP binding site. The helical transmembrane segment at alanine 209–proline 229 threads the bilayer. Over lysine 230–threonine 235 the chain is Extracellular. Residues alanine 236–leucine 256 form a helical membrane-spanning segment. The Cytoplasmic segment spans residues tyrosine 257 to arginine 278. A helical membrane pass occupies residues glycine 279–glycine 299. The Extracellular portion of the chain corresponds to glutamine 300–serine 344.

It belongs to the plant ureide permease (TC 2.A.7.19) family.

It localises to the membrane. In terms of biological role, proton-coupled transporter that transports a wide spectrum of oxo derivatives of heterocyclic nitrogen compounds. This is Ureide permease 3 from Arabidopsis thaliana (Mouse-ear cress).